A 394-amino-acid chain; its full sequence is 1-deoxy-D-xylulose 5-phosphate reductoisomerase (394 aa).

Thr-12, Gly-13, Ser-14, Ile-15, Gly-38, and Asn-126 together coordinate NADPH. Position 127 (Lys-127) interacts with 1-deoxy-D-xylulose 5-phosphate. Glu-128 is an NADPH binding site. Asp-151 provides a ligand contact to Mn(2+). Ser-152, Glu-153, Ser-177, and His-200 together coordinate 1-deoxy-D-xylulose 5-phosphate. Glu-153 is a binding site for Mn(2+). An NADPH-binding site is contributed by Gly-206. 1-deoxy-D-xylulose 5-phosphate is bound by residues Ser-213, Asn-218, Lys-219, and Glu-222. Residue Glu-222 participates in Mn(2+) binding.

It belongs to the DXR family. Mg(2+) serves as cofactor. It depends on Mn(2+) as a cofactor.

The catalysed reaction is 2-C-methyl-D-erythritol 4-phosphate + NADP(+) = 1-deoxy-D-xylulose 5-phosphate + NADPH + H(+). Its pathway is isoprenoid biosynthesis; isopentenyl diphosphate biosynthesis via DXP pathway; isopentenyl diphosphate from 1-deoxy-D-xylulose 5-phosphate: step 1/6. Catalyzes the NADPH-dependent rearrangement and reduction of 1-deoxy-D-xylulose-5-phosphate (DXP) to 2-C-methyl-D-erythritol 4-phosphate (MEP). The chain is 1-deoxy-D-xylulose 5-phosphate reductoisomerase from Beutenbergia cavernae (strain ATCC BAA-8 / DSM 12333 / CCUG 43141 / JCM 11478 / NBRC 16432 / NCIMB 13614 / HKI 0122).